The following is a 461-amino-acid chain: Ribitol-5-phosphate transferase FKTN (461 aa).

Residues 1 to 7 (MSRINKN) lie on the Cytoplasmic side of the membrane. Residues 6–27 (KNVVLALLTLTSSAFLLFQLYY) form a required and sufficient for interaction with POMGNT1 region. Residues 8-28 (VVLALLTLTSSAFLLFQLYYY) traverse the membrane as a helical; Signal-anchor for type II membrane protein segment. At 29–461 (KHYLSTKNGA…SEWDEVIQLY (433 aa)) the chain is on the lumenal side. Asparagine 92 is a glycosylation site (N-linked (GlcNAc...) asparagine).

Belongs to the LicD transferase family. In terms of assembly, forms a complex composed of FKTN/fukutin, FKRP and RXYLT1/TMEM5. Interacts (via transmembrane domain) with POMGNT1; the interaction is direct and is required for normal POMGNT1 location in Golgi membranes. As to expression, expressed in the retina (at protein level). Widely expressed with highest expression in brain, heart, pancreas and skeletal muscle. Expressed at similar levels in control fetal and adult brain. Expressed in migrating neurons, including Cajar-Retzius cells and adult cortical neurons, as well as hippocampal pyramidal cells and cerebellar Purkinje cells. No expression observed in the glia limitans, the subpial astrocytes (which contribute to basement membrane formation) or other glial cells.

Its subcellular location is the golgi apparatus membrane. It localises to the cytoplasm. It is found in the nucleus. The enzyme catalyses 3-O-[beta-D-GalNAc-(1-&gt;3)-beta-D-GlcNAc-(1-&gt;4)-(O-6-P-alpha-D-Man)]-Thr-[protein] + CDP-L-ribitol = 3-O-[Rib-ol-P-3-beta-D-GalNAc-(1-&gt;3)-beta-D-GlcNAc-(1-&gt;4)-(O-6-P-alpha-D-Man)]-Thr-[protein] + CMP + H(+). Its pathway is protein modification; protein glycosylation. Its function is as follows. Catalyzes the transfer of a ribitol-phosphate from CDP-ribitol to the distal N-acetylgalactosamine of the phosphorylated O-mannosyl trisaccharide (N-acetylgalactosamine-beta-3-N-acetylglucosamine-beta-4-(phosphate-6-)mannose), a carbohydrate structure present in alpha-dystroglycan (DAG1). This constitutes the first step in the formation of the ribitol 5-phosphate tandem repeat which links the phosphorylated O-mannosyl trisaccharide to the ligand binding moiety composed of repeats of 3-xylosyl-alpha-1,3-glucuronic acid-beta-1. Required for normal location of POMGNT1 in Golgi membranes, and for normal POMGNT1 activity. May interact with and reinforce a large complex encompassing the outside and inside of muscle membranes. Could be involved in brain development. This is Ribitol-5-phosphate transferase FKTN from Homo sapiens (Human).